Reading from the N-terminus, the 447-residue chain is UDP-N-acetylmuramoyl-L-alanyl-D-glutamate--2,6-diaminopimelate ligase (447 aa).

Position 21 (threonine 21) interacts with UDP-N-acetyl-alpha-D-muramoyl-L-alanyl-D-glutamate. Residue 74 to 80 (GTNGKTT) coordinates ATP. UDP-N-acetyl-alpha-D-muramoyl-L-alanyl-D-glutamate-binding positions include 117–118 (TT), serine 144, glutamine 150, and arginine 152. N6-carboxylysine is present on lysine 184. Residues arginine 340, 364-367 (DNPR), glycine 415, and glutamate 419 each bind meso-2,6-diaminopimelate. The Meso-diaminopimelate recognition motif signature appears at 364–367 (DNPR).

The protein belongs to the MurCDEF family. MurE subfamily. The cofactor is Mg(2+). In terms of processing, carboxylation is probably crucial for Mg(2+) binding and, consequently, for the gamma-phosphate positioning of ATP.

Its subcellular location is the cytoplasm. It carries out the reaction UDP-N-acetyl-alpha-D-muramoyl-L-alanyl-D-glutamate + meso-2,6-diaminopimelate + ATP = UDP-N-acetyl-alpha-D-muramoyl-L-alanyl-gamma-D-glutamyl-meso-2,6-diaminopimelate + ADP + phosphate + H(+). It functions in the pathway cell wall biogenesis; peptidoglycan biosynthesis. In terms of biological role, catalyzes the addition of meso-diaminopimelic acid to the nucleotide precursor UDP-N-acetylmuramoyl-L-alanyl-D-glutamate (UMAG) in the biosynthesis of bacterial cell-wall peptidoglycan. In Helicobacter pylori (strain J99 / ATCC 700824) (Campylobacter pylori J99), this protein is UDP-N-acetylmuramoyl-L-alanyl-D-glutamate--2,6-diaminopimelate ligase.